Here is a 445-residue protein sequence, read N- to C-terminus: Mannan endo-1,4-beta-mannosidase 2 (445 aa).

An N-terminal signal peptide occupies residues methionine 1–glycine 27. Position 110 (tryptophan 110) interacts with substrate. Asparagine 181 is a glycosylation site (N-linked (GlcNAc...) asparagine). Asparagine 226 is a substrate binding site. Glutamate 227 functions as the Proton donor in the catalytic mechanism. Tyrosine 309 provides a ligand contact to substrate. The active-site Nucleophile is the glutamate 349. Tryptophan 391 contacts substrate.

It belongs to the glycosyl hydrolase 5 (cellulase A) family. As to expression, expressed in stems and seeds, and at lower levels in roots and leaves.

It localises to the secreted. The catalysed reaction is Random hydrolysis of (1-&gt;4)-beta-D-mannosidic linkages in mannans, galactomannans and glucomannans.. This Oryza sativa subsp. japonica (Rice) protein is Mannan endo-1,4-beta-mannosidase 2 (MAN2).